Reading from the N-terminus, the 503-residue chain is Na(+)-translocating NADH-quinone reductase subunit B (503 aa).

Helical transmembrane passes span 55-75 (MMLV…NSGL), 120-142 (IFLP…FAII), and 160-180 (LILP…FGVV). Position 248 is an FMN phosphoryl threonine (Thr248). Transmembrane regions (helical) follow at residues 361–381 (TSTV…IASW), 384–404 (MLSF…MSIL), 417–437 (FFIP…LVFM), 452–472 (WLYG…NPAY), and 475–495 (GVML…NIAL).

The protein belongs to the NqrB/RnfD family. Composed of six subunits; NqrA, NqrB, NqrC, NqrD, NqrE and NqrF. Requires FMN as cofactor.

The protein localises to the cell inner membrane. The enzyme catalyses a ubiquinone + n Na(+)(in) + NADH + H(+) = a ubiquinol + n Na(+)(out) + NAD(+). In terms of biological role, NQR complex catalyzes the reduction of ubiquinone-1 to ubiquinol by two successive reactions, coupled with the transport of Na(+) ions from the cytoplasm to the periplasm. NqrA to NqrE are probably involved in the second step, the conversion of ubisemiquinone to ubiquinol. The polypeptide is Na(+)-translocating NADH-quinone reductase subunit B (Chlamydia trachomatis serovar A (strain ATCC VR-571B / DSM 19440 / HAR-13)).